The primary structure comprises 893 residues: DNA gyrase subunit A (893 aa).

The Topo IIA-type catalytic domain occupies 35–501 (LPDVRDGLKP…GLEDLEDEDL (467 aa)). Tyr123 (O-(5'-phospho-DNA)-tyrosine intermediate) is an active-site residue. Positions 528-534 (QNRGGRG) match the GyrA-box motif. The interval 810–893 (VNEEDDNEEN…ASDNEEDSDE (84 aa)) is disordered. 2 stretches are compositionally biased toward acidic residues: residues 812–821 (EEDDNEENAD) and 852–862 (DAEMESVESPE). Residues 863-879 (NDDRIDIRQDFMDRVNE) show a composition bias toward basic and acidic residues. Residues 880 to 893 (DIESASDNEEDSDE) show a composition bias toward acidic residues.

It belongs to the type II topoisomerase GyrA/ParC subunit family. In terms of assembly, heterotetramer, composed of two GyrA and two GyrB chains. In the heterotetramer, GyrA contains the active site tyrosine that forms a transient covalent intermediate with DNA, while GyrB binds cofactors and catalyzes ATP hydrolysis.

It is found in the cytoplasm. It carries out the reaction ATP-dependent breakage, passage and rejoining of double-stranded DNA.. Functionally, a type II topoisomerase that negatively supercoils closed circular double-stranded (ds) DNA in an ATP-dependent manner to modulate DNA topology and maintain chromosomes in an underwound state. Negative supercoiling favors strand separation, and DNA replication, transcription, recombination and repair, all of which involve strand separation. Also able to catalyze the interconversion of other topological isomers of dsDNA rings, including catenanes and knotted rings. Type II topoisomerases break and join 2 DNA strands simultaneously in an ATP-dependent manner. This Staphylococcus epidermidis (strain ATCC 35984 / DSM 28319 / BCRC 17069 / CCUG 31568 / BM 3577 / RP62A) protein is DNA gyrase subunit A.